The following is a 412-amino-acid chain: Transcription factor IIIA (412 aa).

The segment at 1 to 20 (MSESDETKSISSLISSSSSS) is disordered. The segment covering 9 to 20 (SISSLISSSSSS) has biased composition (low complexity). C2H2-type zinc fingers lie at residues 25 to 49 (YICTYEGCDKAYNRPSLLEQHLRTH), 55 to 79 (YKCTVEDCDKAFFRKSHLETHIVSH), 85 to 107 (FHCSVCGKGVNSRQHLKRHEITH), 111 to 136 (FKCTFENCQEAFYKHQSLRHHILSVH), 140 to 162 (LTCKQCNKVFTRPSKLAQHKLKH), 169 to 194 (YQCDHPGCFKNFQTWSVLQFHIKQSH), and 197 to 219 (LKCPKCGKGCVGKKGLSSHMLSH). The segment at 228–252 (WTCDYCDVGKFAKKNELVEHYNIFH) adopts a C2H2-type 8; degenerate zinc-finger fold. Residues 285-316 (LETEKLKVEEDEEDEEDSLDEKRSDVRSDSMS) are disordered. Over residues 293-303 (EEDEEDEEDSL) the composition is skewed to acidic residues. The C2H2-type 9 zinc-finger motif lies at 345 to 369 (INCPKNNCDRMFSREYDLRRHLKWH).

Its subcellular location is the nucleus. Its function is as follows. Transcription factor required for transcription of 5S rRNA by RNA polymerase III. The polypeptide is Transcription factor IIIA (PZF1) (Candida albicans (strain SC5314 / ATCC MYA-2876) (Yeast)).